The chain runs to 184 residues: Photosystem I assembly protein Ycf4 (184 aa).

The next 2 helical transmembrane spans lie at 22-42 and 57-77; these read FCWAFILFLGSLGFLLVGTSS and IIFFPQGIVMSFYGIAGLFIS.

This sequence belongs to the Ycf4 family.

Its subcellular location is the plastid. It localises to the chloroplast thylakoid membrane. Functionally, seems to be required for the assembly of the photosystem I complex. The polypeptide is Photosystem I assembly protein Ycf4 (Arabis hirsuta (Hairy rock-cress)).